The sequence spans 219 residues: Cytidylate kinase (219 aa).

15–23 (GPAASGKGT) provides a ligand contact to ATP.

It belongs to the cytidylate kinase family. Type 1 subfamily.

Its subcellular location is the cytoplasm. It catalyses the reaction CMP + ATP = CDP + ADP. The enzyme catalyses dCMP + ATP = dCDP + ADP. This chain is Cytidylate kinase, found in Brucella suis biovar 1 (strain 1330).